The following is a 603-amino-acid chain: Elongation factor 4 (603 aa).

One can recognise a tr-type G domain in the interval 2 to 184; that stretch reads NHIRNFSIIA…AVVALIPAPK (183 aa). GTP is bound by residues 14-19 and 131-134; these read DHGKST and NKMD.

It belongs to the TRAFAC class translation factor GTPase superfamily. Classic translation factor GTPase family. LepA subfamily.

The protein resides in the cell inner membrane. It carries out the reaction GTP + H2O = GDP + phosphate + H(+). In terms of biological role, required for accurate and efficient protein synthesis under certain stress conditions. May act as a fidelity factor of the translation reaction, by catalyzing a one-codon backward translocation of tRNAs on improperly translocated ribosomes. Back-translocation proceeds from a post-translocation (POST) complex to a pre-translocation (PRE) complex, thus giving elongation factor G a second chance to translocate the tRNAs correctly. Binds to ribosomes in a GTP-dependent manner. In Polaromonas naphthalenivorans (strain CJ2), this protein is Elongation factor 4.